The primary structure comprises 81 residues: Anaphase-promoting complex subunit emb-1 (81 aa).

The APC/C is probably composed of at least 12 subunits: apc-2, apc-10, apc-11, cdc-26, emb-1, emb-27, emb-30, mat-1, mat-2, mat-3, such-1 and gfi-3. As to expression, expressed in germ cells.

The protein operates within protein modification; protein ubiquitination. In terms of biological role, probable component of the anaphase promoting complex/cyclosome (APC/C), a cell cycle-regulated E3 ubiquitin ligase that controls progression through mitosis and the G1 phase of the cell cycle. The APC/C complex acts by mediating ubiquitination and subsequent degradation of target proteins. Developmental role in early embryogenesis and the metaphase to anaphase transition in meiosis and mitosis. May be required for germline proliferation. Required for male tail development and hermaphrodite vulva formation. This is Anaphase-promoting complex subunit emb-1 from Caenorhabditis elegans.